The sequence spans 300 residues: GTPase Era (300 aa).

In terms of domain architecture, Era-type G spans 8 to 176; the sequence is RCGYVAIVGR…ESLIASHLPE (169 aa). A G1 region spans residues 16-23; the sequence is GRPNVGKS. 16–23 is a binding site for GTP; the sequence is GRPNVGKS. A G2 region spans residues 42-46; it reads QTTRH. Residues 63–66 form a G3 region; sequence DTPG. GTP-binding positions include 63–67 and 125–128; these read DTPGM and NKTD. A G4 region spans residues 125–128; that stretch reads NKTD. Positions 155–157 are G5; the sequence is ISA. Residues 199 to 283 enclose the KH type-2 domain; that stretch reads VREKIMRQLG…MLNLWVKVKG (85 aa).

This sequence belongs to the TRAFAC class TrmE-Era-EngA-EngB-Septin-like GTPase superfamily. Era GTPase family. In terms of assembly, monomer.

Its subcellular location is the cytoplasm. It is found in the cell inner membrane. An essential GTPase that binds both GDP and GTP, with rapid nucleotide exchange. Plays a role in 16S rRNA processing and 30S ribosomal subunit biogenesis and possibly also in cell cycle regulation and energy metabolism. The polypeptide is GTPase Era (Pseudomonas syringae pv. tomato (strain ATCC BAA-871 / DC3000)).